The chain runs to 51 residues: Lantibiotic streptococcin A-FF22 (51 aa).

Positions 1 to 25 (MEKNNEVINSIQEVSLEELDQIIGA) are excised as a propeptide. 2 consecutive cross-links (beta-methyllanthionine (Thr-Cys)) follow at residues 33–38 (TISHEC) and 42–50 (TWAFLATCC). The lanthionine (Ser-Cys) cross-link spans 35–49 (SHECHLNTWAFLATC). Threonine 48 carries the 2,3-didehydrobutyrine modification.

Belongs to the type A lantibiotic family. Maturation of lantibiotics involves the enzymatic conversion of Thr, and Ser into dehydrated AA and the formation of thioether bonds with cysteine. This is followed by membrane translocation and cleavage of the modified precursor.

The protein localises to the secreted. It is found in the cell surface. Its function is as follows. Lanthionine-containing peptide antibiotic (lantibiotic) active on certain Gram-positive bacteria. The bactericidal activity of lantibiotics is based on depolarization of energized bacterial cytoplasmic membranes, initiated by the formation of aqueous transmembrane pores. This Streptococcus pyogenes protein is Lantibiotic streptococcin A-FF22 (scnA).